A 180-amino-acid polypeptide reads, in one-letter code: Probable RNA 2'-phosphotransferase (180 aa).

This sequence belongs to the KptA/TPT1 family.

Removes the 2'-phosphate from RNA via an intermediate in which the phosphate is ADP-ribosylated by NAD followed by a presumed transesterification to release the RNA and generate ADP-ribose 1''-2''-cyclic phosphate (APPR&gt;P). May function as an ADP-ribosylase. The protein is Probable RNA 2'-phosphotransferase of Pectobacterium atrosepticum (strain SCRI 1043 / ATCC BAA-672) (Erwinia carotovora subsp. atroseptica).